Here is a 468-residue protein sequence, read N- to C-terminus: Siroheme synthase (468 aa).

Residues 1-202 form a precorrin-2 dehydrogenase /sirohydrochlorin ferrochelatase region; sequence MDYLPLFARL…EQHDSAEQWM (202 aa). NAD(+) is bound by residues 22-23 and 43-44; these read DI and PS. The residue at position 126 (Ser126) is a Phosphoserine. The interval 214–468 is uroporphyrinogen-III C-methyltransferase; it reads GEIVLVGAGP…SGKEHLINLA (255 aa). Pro223 is an S-adenosyl-L-methionine binding site. The active-site Proton acceptor is Asp246. Lys268 acts as the Proton donor in catalysis. Residues 299 to 301, 329 to 330, Met381, and Gly410 each bind S-adenosyl-L-methionine; these read GGD and TA.

This sequence in the N-terminal section; belongs to the precorrin-2 dehydrogenase / sirohydrochlorin ferrochelatase family. It in the C-terminal section; belongs to the precorrin methyltransferase family.

The catalysed reaction is uroporphyrinogen III + 2 S-adenosyl-L-methionine = precorrin-2 + 2 S-adenosyl-L-homocysteine + H(+). It catalyses the reaction precorrin-2 + NAD(+) = sirohydrochlorin + NADH + 2 H(+). The enzyme catalyses siroheme + 2 H(+) = sirohydrochlorin + Fe(2+). It participates in cofactor biosynthesis; adenosylcobalamin biosynthesis; precorrin-2 from uroporphyrinogen III: step 1/1. The protein operates within cofactor biosynthesis; adenosylcobalamin biosynthesis; sirohydrochlorin from precorrin-2: step 1/1. It functions in the pathway porphyrin-containing compound metabolism; siroheme biosynthesis; precorrin-2 from uroporphyrinogen III: step 1/1. Its pathway is porphyrin-containing compound metabolism; siroheme biosynthesis; siroheme from sirohydrochlorin: step 1/1. It participates in porphyrin-containing compound metabolism; siroheme biosynthesis; sirohydrochlorin from precorrin-2: step 1/1. Its function is as follows. Multifunctional enzyme that catalyzes the SAM-dependent methylations of uroporphyrinogen III at position C-2 and C-7 to form precorrin-2 via precorrin-1. Then it catalyzes the NAD-dependent ring dehydrogenation of precorrin-2 to yield sirohydrochlorin. Finally, it catalyzes the ferrochelation of sirohydrochlorin to yield siroheme. The polypeptide is Siroheme synthase (Tolumonas auensis (strain DSM 9187 / NBRC 110442 / TA 4)).